The chain runs to 254 residues: Coiled-coil domain-containing protein 152 (254 aa).

Residues 61 to 246 are a coiled coil; that stretch reads SIKEECATLH…LEQRLSVGKD (186 aa).

Detected in stomach.

The protein is Coiled-coil domain-containing protein 152 (CCDC152) of Homo sapiens (Human).